The chain runs to 298 residues: Ribosomal protein L11 methyltransferase (298 aa).

S-adenosyl-L-methionine-binding residues include T139, G163, D185, and N232.

Belongs to the methyltransferase superfamily. PrmA family.

The protein localises to the cytoplasm. It catalyses the reaction L-lysyl-[protein] + 3 S-adenosyl-L-methionine = N(6),N(6),N(6)-trimethyl-L-lysyl-[protein] + 3 S-adenosyl-L-homocysteine + 3 H(+). Functionally, methylates ribosomal protein L11. The chain is Ribosomal protein L11 methyltransferase from Gloeothece citriformis (strain PCC 7424) (Cyanothece sp. (strain PCC 7424)).